A 290-amino-acid polypeptide reads, in one-letter code: Lysine export transcriptional regulatory protein LysG (290 aa).

The HTH lysR-type domain occupies 1 to 57; sequence MNPIQLDTLLSIIDEGSFEGASLALSISPSAVSQRVKALEHHVGRVLVSRTQPAKAT. Residues 18 to 37 constitute a DNA-binding region (H-T-H motif); that stretch reads FEGASLALSISPSAVSQRVK.

The protein belongs to the LysR transcriptional regulatory family.

Its function is as follows. Positively regulates the expression of the exporter LysE. Induction requires the presence of a coinducer, which is either intracellular L-lysine, L-arginine or L-citrulline. L-histidine also acts as a coinducer of lysE expression, but this amino acid is not exported by LysE. The lysEG system prevents bacteriostasis due to elevated L-lysine or L-arginine concentrations that arise during growth in the presence of peptides or in mutants possessing a deregulated biosynthesis pathway. The polypeptide is Lysine export transcriptional regulatory protein LysG (Corynebacterium glutamicum (strain ATCC 13032 / DSM 20300 / JCM 1318 / BCRC 11384 / CCUG 27702 / LMG 3730 / NBRC 12168 / NCIMB 10025 / NRRL B-2784 / 534)).